The following is a 490-amino-acid chain: Probable G-protein coupled receptor npr-8 (490 aa).

The Extracellular portion of the chain corresponds to 1 to 55 (MEVKDIDNYCDRGISPNASNYLTYPFDGLCLQKFFYQLQTSLRRFTPYEEIIYTT). A glycan (N-linked (GlcNAc...) asparagine) is linked at N17. A helical transmembrane segment spans residues 56–76 (VYIIISVAAVIGNGLVIMAVV). Over 77–86 (RKKTMRTNRN) the chain is Cytoplasmic. The helical transmembrane segment at 87-107 (VLILNLALSNLILAITNIPFL) threads the bilayer. Residues 108-125 (WLPSIDFEFPYSRFFCKF) are Extracellular-facing. Residues 126-146 (ANVLPGSNIYCSTLTISVMAI) form a helical membrane-spanning segment. Topologically, residues 147–166 (DRYYSVKKLKIASNRKQCFH) are cytoplasmic. Residues 167 to 187 (AVLVSLAIWIVSFILSLPLLL) form a helical membrane-spanning segment. Over 188 to 236 (YYETSMLYVMREIRVVDQSGQEVIRSYGWRQCRLVSAGRLPDITQSIQL) the chain is Extracellular. The helical transmembrane segment at 237–257 (LMSILQVAFLYIVPLFVLSIF) threads the bilayer. Over 258–331 (NVKLTRFLKT…QRTNRTTSLL (74 aa)) the chain is Cytoplasmic. A disordered region spans residues 272-322 (MSKTRAPPKRFDRSDSHHNSLKNNNNHTSSLRSPSMPSIRSSITERNKTNQ). Positions 280-289 (KRFDRSDSHH) are enriched in basic and acidic residues. The segment covering 292–313 (LKNNNNHTSSLRSPSMPSIRSS) has biased composition (low complexity). The helical transmembrane segment at 332-352 (IAMAGSYAALWFPFTLITFLI) threads the bilayer. Topologically, residues 353–374 (DFELIINQDYVNLVERIDQTCK) are extracellular. The chain crosses the membrane as a helical span at residues 375-395 (MVSMLSICVNPFLYGFLNTNF). The Cytoplasmic portion of the chain corresponds to 396–490 (RHEFSDIYYR…DDDIEKDSFV (95 aa)).

It belongs to the G-protein coupled receptor 1 family.

It is found in the cell membrane. Its function is as follows. Not known. Putative receptor. This is Probable G-protein coupled receptor npr-8 from Caenorhabditis elegans.